We begin with the raw amino-acid sequence, 117 residues long: uncharacterized protein (117 aa).

This is an uncharacterized protein from Escherichia coli O157:H7.